A 210-amino-acid chain; its full sequence is Thymidylate kinase (210 aa).

An ATP-binding site is contributed by 9–16; sequence GLEGAGKS.

Belongs to the thymidylate kinase family.

It catalyses the reaction dTMP + ATP = dTDP + ADP. Functionally, phosphorylation of dTMP to form dTDP in both de novo and salvage pathways of dTTP synthesis. This is Thymidylate kinase from Aliivibrio fischeri (strain ATCC 700601 / ES114) (Vibrio fischeri).